Consider the following 101-residue polypeptide: Small nuclear ribonucleoprotein Sm D3 (101 aa).

One can recognise a Sm domain in the interval 6 to 78 (IPVKLLNEAQ…IKFIVVPDLL (73 aa)).

The protein belongs to the snRNP core protein family. Component of the Sm core complex, present in spliceosomal snRNP U1, U2, U4/U6 and U5. The core complex contains SMB1, SMD1, SMD2, SMD3, SME1, SMX3 and SMX2 (Sm proteins B, D1, D2, D3, E, F and G, respectively), and is probably a heptameric ring structure. SMD3 specifically interacts with SMB1. Belongs to the CWC complex (or CEF1-associated complex), a spliceosome sub-complex reminiscent of a late-stage spliceosome composed of the U2, U5 and U6 snRNAs and at least BUD13, BUD31, BRR2, CDC40, CEF1, CLF1, CUS1, CWC2, CWC15, CWC21, CWC22, CWC23, CWC24, CWC25, CWC27, ECM2, HSH155, IST3, ISY1, LEA1, MSL1, NTC20, PRP8, PRP9, PRP11, PRP19, PRP21, PRP22, PRP45, PRP46, SLU7, SMB1, SMD1, SMD2, SMD3, SMX2, SMX3, SNT309, SNU114, SPP2, SYF1, SYF2, RSE1 and YJU2. Component of the U4/U6-U5 tri-snRNP complex composed of the U4, U6 and U5 snRNAs and at least PRP3, PRP4, PRP6, PRP8, PRP18, PRP31, PRP38, SNU13, SNU23, SNU66, SNU114, SPP381, SMB1, SMD1, SMD2, SMD3, SMX2, SMX3, LSM2, LSM3, LSM4, LSM5, LSM6, LSM7, LSM8, BRR2 and DIB1.

The protein resides in the cytoplasm. It localises to the cytosol. Its subcellular location is the nucleus. In terms of biological role, plays a role in pre-mRNA splicing as a core component of the spliceosomal U1, U2, U4 and U5 small nuclear ribonucleoproteins (snRNPs), the building blocks of the spliceosome. Also binds telomerase RNA and is required for its accumulation. This Saccharomyces cerevisiae (strain ATCC 204508 / S288c) (Baker's yeast) protein is Small nuclear ribonucleoprotein Sm D3 (SMD3).